The chain runs to 215 residues: MHDPRGFPIHPQPYHLHPTAGGLGEGRMRGGGRRRPGAKLSTDPQSVAARERRHRISDRFRVLRSLVPGGSKMDTVSMLEQAIHYVKFLKAQVTLHQAALVQHEEGCQHADVAAAFSAADADLALELNHRHGGAGDDDAGMTTLEMAPMQEAVGYGDGPAHQMMQQALDPAGQLMMGGAHQLPPLPCCVFVQETDPSCYSVCNVHGEESGAQGSY.

Positions 1–48 are disordered; sequence MHDPRGFPIHPQPYHLHPTAGGLGEGRMRGGGRRRPGAKLSTDPQSVA. The basic motif; degenerate stretch occupies residues 40–53; the sequence is LSTDPQSVAARERR. One can recognise a bHLH domain in the interval 40–89; it reads LSTDPQSVAARERRHRISDRFRVLRSLVPGGSKMDTVSMLEQAIHYVKFL. Residues 54–89 are helix-loop-helix motif; that stretch reads HRISDRFRVLRSLVPGGSKMDTVSMLEQAIHYVKFL.

This sequence belongs to the bHLH protein family. In terms of assembly, efficient DNA binding requires dimerization with another bHLH protein. Interacts with LAX2. Expressed in the boundary between the shoot apical meristem (SAM) and the region of new meristem formation.

The protein resides in the nucleus. In terms of biological role, transcription factor that seems to regulate organogenesis in postembryonic development. Involved in the regulation of shoot branching by controlling axillary meristem initiation. Functions in association with LAX2 to regulate the process of AM formation. Possesses transactivation activity in yeast. The polypeptide is Transcription factor LAX PANICLE 1 (Oryza sativa subsp. japonica (Rice)).